The following is a 202-amino-acid chain: V-type ATP synthase subunit D (202 aa).

This sequence belongs to the V-ATPase D subunit family.

Produces ATP from ADP in the presence of a proton gradient across the membrane. The chain is V-type ATP synthase subunit D (atpD) from Borreliella burgdorferi (strain ATCC 35210 / DSM 4680 / CIP 102532 / B31) (Borrelia burgdorferi).